The sequence spans 156 residues: Small ribosomal subunit protein uS7 (156 aa).

This sequence belongs to the universal ribosomal protein uS7 family. As to quaternary structure, part of the 30S ribosomal subunit. Contacts proteins S9 and S11.

Functionally, one of the primary rRNA binding proteins, it binds directly to 16S rRNA where it nucleates assembly of the head domain of the 30S subunit. Is located at the subunit interface close to the decoding center, probably blocks exit of the E-site tRNA. The polypeptide is Small ribosomal subunit protein uS7 (Desulforamulus reducens (strain ATCC BAA-1160 / DSM 100696 / MI-1) (Desulfotomaculum reducens)).